We begin with the raw amino-acid sequence, 302 residues long: Putative receptor-like protein 16 (302 aa).

3 LRR repeats span residues 1-19, 20-43, and 45-70; these read MNLT…LGNM, EMIE…FLKG, and DSLI…NFFS. Residues 72–91 form an LRR 4; degenerate repeat; sequence LELSMDNNLFTGKIGRGLQS. LRR repeat units follow at residues 92–115, 116–140, 142–164, 166–188, 190–211, 213–234, and 235–258; these read LRSL…WFDQ, LQDL…LFNM, SLQL…ISGY, ALKV…LLGK, IIVL…INTQ, IRIL…LCAV, and RSIH…LRNA.

This sequence belongs to the RLP family.

In Arabidopsis thaliana (Mouse-ear cress), this protein is Putative receptor-like protein 16.